A 375-amino-acid chain; its full sequence is Pulmonary surfactant-associated protein D (375 aa).

Residues 1–21 (MLLFLLSALVLLTQSLGYLEA) form the signal peptide. S-nitrosocysteine is present on residues Cys-35 and Cys-40. Residues 43 to 221 (VESGLPGRDG…DKGAKGESGL (179 aa)) form a disordered region. In terms of domain architecture, Collagen-like spans 46–222 (GLPGRDGRDG…KGAKGESGLP (177 aa)). Over residues 50–65 (RDGRDGREGPRGEKGD) the composition is skewed to basic and acidic residues. A 4-hydroxyproline modification is found at Pro-78. A 5-hydroxylysine modification is found at Lys-87. An N-linked (GlcNAc...) asparagine glycan is attached at Asn-90. A 4-hydroxyproline modification is found at Pro-96. Lys-99 carries the post-translational modification 5-hydroxylysine. Pro residues predominate over residues 105-114 (SGPPGPPGVP). Low complexity-rich tracts occupy residues 116 to 132 (PAGR…IGPQ) and 138 to 150 (KGEA…VGAP). 2 positions are modified to 4-hydroxyproline: Pro-171 and Pro-177. The span at 173 to 189 (ERGAPGNAGAAGSAGVM) shows a compositional bias: low complexity. Basic and acidic residues predominate over residues 204-216 (KGDKGVPGDKGAK). Residues 223–251 (DVASLRQQVEALQKQVQHLQAAFSQYKKV) adopt a coiled-coil conformation. One can recognise a C-type lectin domain in the interval 260–374 (VGEKIFKTAG…CGEKRLVVCE (115 aa)). 2 cysteine pairs are disulfide-bonded: Cys-281–Cys-373 and Cys-351–Cys-365.

Belongs to the SFTPD family. In terms of assembly, oligomeric complex of 4 set of homotrimers. Hydroxylation on proline residues within the sequence motif, GXPG, is most likely to be 4-hydroxy as this fits the requirement for 4-hydroxylation in vertebrates. In terms of processing, S-nitrosylation at Cys-35 and Cys-40 alters the quaternary structure which results in a pro-inflammatory chemoattractive signaling activity with macrophages.

It localises to the secreted. The protein resides in the extracellular space. The protein localises to the extracellular matrix. It is found in the surface film. Its function is as follows. Contributes to the lung's defense against inhaled microorganisms, organic antigens and toxins. Interacts with compounds such as bacterial lipopolysaccharides, oligosaccharides and fatty acids and modulates leukocyte action in immune response. May participate in the extracellular reorganization or turnover of pulmonary surfactant. Binds strongly maltose residues and to a lesser extent other alpha-glucosyl moieties. In Macaca mulatta (Rhesus macaque), this protein is Pulmonary surfactant-associated protein D (SFTPD).